The primary structure comprises 186 residues: Elongation factor P (186 aa).

The protein belongs to the elongation factor P family.

It is found in the cytoplasm. Its pathway is protein biosynthesis; polypeptide chain elongation. Involved in peptide bond synthesis. Stimulates efficient translation and peptide-bond synthesis on native or reconstituted 70S ribosomes in vitro. Probably functions indirectly by altering the affinity of the ribosome for aminoacyl-tRNA, thus increasing their reactivity as acceptors for peptidyl transferase. The chain is Elongation factor P from Synechococcus sp. (strain RCC307).